The primary structure comprises 273 residues: Putative phosphoenolpyruvate synthase regulatory protein (273 aa).

ADP is bound at residue 153-160 (GVSRCGKT).

Belongs to the pyruvate, phosphate/water dikinase regulatory protein family. PSRP subfamily.

It catalyses the reaction [pyruvate, water dikinase] + ADP = [pyruvate, water dikinase]-phosphate + AMP + H(+). It carries out the reaction [pyruvate, water dikinase]-phosphate + phosphate + H(+) = [pyruvate, water dikinase] + diphosphate. In terms of biological role, bifunctional serine/threonine kinase and phosphorylase involved in the regulation of the phosphoenolpyruvate synthase (PEPS) by catalyzing its phosphorylation/dephosphorylation. This Pectobacterium atrosepticum (strain SCRI 1043 / ATCC BAA-672) (Erwinia carotovora subsp. atroseptica) protein is Putative phosphoenolpyruvate synthase regulatory protein.